The sequence spans 281 residues: Glutamate racemase (281 aa).

Substrate-binding positions include 10–11 (DS) and 42–43 (YG). The Proton donor/acceptor role is filled by Cys74. 75 to 76 (NT) lines the substrate pocket. The active-site Proton donor/acceptor is Cys190. 191-192 (TH) provides a ligand contact to substrate.

The protein belongs to the aspartate/glutamate racemases family.

It catalyses the reaction L-glutamate = D-glutamate. It functions in the pathway cell wall biogenesis; peptidoglycan biosynthesis. In terms of biological role, provides the (R)-glutamate required for cell wall biosynthesis. This Oenococcus oeni (strain ATCC BAA-331 / PSU-1) protein is Glutamate racemase.